Consider the following 377-residue polypeptide: Flagellin C (377 aa).

2 coiled-coil regions span residues S103–T129 and V301–D340.

It belongs to the bacterial flagellin family. In terms of assembly, heteromer of multiple flagellin subunits including FlaA, FlaB, FlaC, FlaD and possibly FlaE.

The protein localises to the secreted. It localises to the bacterial flagellum. Functionally, flagellin is the subunit protein which polymerizes to form the filaments of bacterial flagella. FlaC is not essential for flagellar synthesis and motility. The polypeptide is Flagellin C (flaC) (Vibrio anguillarum (Listonella anguillarum)).